The chain runs to 229 residues: Flagellar brake protein YcgR (229 aa).

In terms of domain architecture, PilZ spans Gln-134–Asp-218.

Belongs to the YcgR family. As to quaternary structure, monomer. Interacts with the flagellar basal bodies.

Its subcellular location is the bacterial flagellum basal body. Its function is as follows. Acts as a flagellar brake, regulating swimming and swarming in a bis-(3'-5') cyclic diguanylic acid (c-di-GMP)-dependent manner. Binds 1 c-di-GMP dimer per subunit. Increasing levels of c-di-GMP lead to decreased motility. In Methylibium petroleiphilum (strain ATCC BAA-1232 / LMG 22953 / PM1), this protein is Flagellar brake protein YcgR.